A 174-amino-acid polypeptide reads, in one-letter code: Peptide deformylase (174 aa).

Residues C96 and H138 each contribute to the Fe cation site. Residue E139 is part of the active site. H142 serves as a coordination point for Fe cation.

This sequence belongs to the polypeptide deformylase family. Fe(2+) is required as a cofactor.

It catalyses the reaction N-terminal N-formyl-L-methionyl-[peptide] + H2O = N-terminal L-methionyl-[peptide] + formate. Removes the formyl group from the N-terminal Met of newly synthesized proteins. Requires at least a dipeptide for an efficient rate of reaction. N-terminal L-methionine is a prerequisite for activity but the enzyme has broad specificity at other positions. This Helicobacter pylori (strain G27) protein is Peptide deformylase.